Reading from the N-terminus, the 300-residue chain is Ribosomal RNA small subunit methyltransferase H (300 aa).

Residues glycine 46 to histidine 48, aspartate 65, phenylalanine 92, aspartate 107, and glutamine 114 each bind S-adenosyl-L-methionine.

Belongs to the methyltransferase superfamily. RsmH family.

It is found in the cytoplasm. The catalysed reaction is cytidine(1402) in 16S rRNA + S-adenosyl-L-methionine = N(4)-methylcytidine(1402) in 16S rRNA + S-adenosyl-L-homocysteine + H(+). Its function is as follows. Specifically methylates the N4 position of cytidine in position 1402 (C1402) of 16S rRNA. The polypeptide is Ribosomal RNA small subunit methyltransferase H (Prochlorococcus marinus (strain AS9601)).